Reading from the N-terminus, the 1213-residue chain is DNA-directed RNA polymerase subunit beta' (1213 aa).

Zn(2+) is bound by residues Cys-60, Cys-62, Cys-75, and Cys-78. Mg(2+) is bound by residues Asp-450, Asp-452, and Asp-454. Residues Cys-819, Cys-893, Cys-900, and Cys-903 each coordinate Zn(2+).

This sequence belongs to the RNA polymerase beta' chain family. In terms of assembly, the RNAP catalytic core consists of 2 alpha, 1 beta, 1 beta' and 1 omega subunit. When a sigma factor is associated with the core the holoenzyme is formed, which can initiate transcription. The cofactor is Mg(2+). It depends on Zn(2+) as a cofactor.

It carries out the reaction RNA(n) + a ribonucleoside 5'-triphosphate = RNA(n+1) + diphosphate. Functionally, DNA-dependent RNA polymerase catalyzes the transcription of DNA into RNA using the four ribonucleoside triphosphates as substrates. This is DNA-directed RNA polymerase subunit beta' from Streptococcus pyogenes serotype M4 (strain MGAS10750).